Consider the following 354-residue polypeptide: GTPase Obg (354 aa).

One can recognise an Obg domain in the interval Met1–Ile159. Positions Ala160–Arg328 constitute an OBG-type G domain. GTP is bound by residues Gly166 to Ser173, Phe191 to Thr195, Asp213 to Gly216, Asn280 to Asp283, and Ser309 to Val311. 2 residues coordinate Mg(2+): Ser173 and Thr193. A disordered region spans residues Glu333 to Pro354. Residues Ala339 to Thr348 show a composition bias toward acidic residues.

Belongs to the TRAFAC class OBG-HflX-like GTPase superfamily. OBG GTPase family. In terms of assembly, monomer. It depends on Mg(2+) as a cofactor.

It is found in the cytoplasm. Functionally, an essential GTPase which binds GTP, GDP and possibly (p)ppGpp with moderate affinity, with high nucleotide exchange rates and a fairly low GTP hydrolysis rate. Plays a role in control of the cell cycle, stress response, ribosome biogenesis and in those bacteria that undergo differentiation, in morphogenesis control. The protein is GTPase Obg of Caulobacter sp. (strain K31).